A 99-amino-acid polypeptide reads, in one-letter code: Late cornified envelope protein 4A (99 aa).

The disordered stretch occupies residues 78-99; the sequence is CYGSGSGQQSGGSGCCSGGGCC. The segment covering 81–99 has biased composition (gly residues); sequence SGSGQQSGGSGCCSGGGCC.

This sequence belongs to the LCE family. As to quaternary structure, interacts with CYSRT1; the interaction is direct. As to expression, skin-specific. Expression was readily detected in adult trunk skin, adult arm skin, fetal skin, penal skin, vulva, esophagus and tongue. Not expressed in the cervix, rectum, lung, colon, or placenta.

Precursors of the cornified envelope of the stratum corneum. The chain is Late cornified envelope protein 4A (LCE4A) from Homo sapiens (Human).